The sequence spans 215 residues: Cytochrome b6 (215 aa).

A helical membrane pass occupies residues 32 to 52; the sequence is IFYCLGGITFTCFLVQVATGF. Cys-35 serves as a coordination point for heme c. His-86 and His-100 together coordinate heme b. A run of 3 helical transmembrane segments spans residues 90–110, 116–136, and 186–206; these read ASMM…TGGF, STWI…VTGY, and LHTF…FLMI. Positions 187 and 202 each coordinate heme b.

This sequence belongs to the cytochrome b family. PetB subfamily. The 4 large subunits of the cytochrome b6-f complex are cytochrome b6, subunit IV (17 kDa polypeptide, PetD), cytochrome f and the Rieske protein, while the 4 small subunits are PetG, PetL, PetM and PetN. The complex functions as a dimer. Heme b is required as a cofactor. It depends on heme c as a cofactor.

It localises to the plastid. The protein localises to the chloroplast thylakoid membrane. Its function is as follows. Component of the cytochrome b6-f complex, which mediates electron transfer between photosystem II (PSII) and photosystem I (PSI), cyclic electron flow around PSI, and state transitions. This is Cytochrome b6 from Tetradesmus obliquus (Green alga).